Reading from the N-terminus, the 288-residue chain is Bifunctional protein FolD (288 aa).

NADP(+) is bound by residues 166–168 and Ile-232; that span reads GAS.

This sequence belongs to the tetrahydrofolate dehydrogenase/cyclohydrolase family. As to quaternary structure, homodimer.

It carries out the reaction (6R)-5,10-methylene-5,6,7,8-tetrahydrofolate + NADP(+) = (6R)-5,10-methenyltetrahydrofolate + NADPH. It catalyses the reaction (6R)-5,10-methenyltetrahydrofolate + H2O = (6R)-10-formyltetrahydrofolate + H(+). It participates in one-carbon metabolism; tetrahydrofolate interconversion. Its function is as follows. Catalyzes the oxidation of 5,10-methylenetetrahydrofolate to 5,10-methenyltetrahydrofolate and then the hydrolysis of 5,10-methenyltetrahydrofolate to 10-formyltetrahydrofolate. The chain is Bifunctional protein FolD from Escherichia coli O139:H28 (strain E24377A / ETEC).